Reading from the N-terminus, the 432-residue chain is Phosphomethylpyrimidine synthase (432 aa).

Residues N66, M95, Y124, H163, 185–187 (SRG), 226–229 (DGLR), and E265 contribute to the substrate site. Position 269 (H269) interacts with Zn(2+). Position 292 (Y292) interacts with substrate. H333 provides a ligand contact to Zn(2+). Residues C409, C412, and C416 each coordinate [4Fe-4S] cluster.

It belongs to the ThiC family. The cofactor is [4Fe-4S] cluster.

It carries out the reaction 5-amino-1-(5-phospho-beta-D-ribosyl)imidazole + S-adenosyl-L-methionine = 4-amino-2-methyl-5-(phosphooxymethyl)pyrimidine + CO + 5'-deoxyadenosine + formate + L-methionine + 3 H(+). It participates in cofactor biosynthesis; thiamine diphosphate biosynthesis. Its function is as follows. Catalyzes the synthesis of the hydroxymethylpyrimidine phosphate (HMP-P) moiety of thiamine from aminoimidazole ribotide (AIR) in a radical S-adenosyl-L-methionine (SAM)-dependent reaction. In Desulfitobacterium hafniense (strain DSM 10664 / DCB-2), this protein is Phosphomethylpyrimidine synthase.